The primary structure comprises 356 residues: 3-dehydroquinate synthase (356 aa).

Residues 106-110 (GVVGD), 130-131 (TS), lysine 143, lysine 152, and 170-173 (FLKT) each bind NAD(+). Residues glutamate 185, histidine 246, and histidine 263 each coordinate Zn(2+).

This sequence belongs to the sugar phosphate cyclases superfamily. Dehydroquinate synthase family. NAD(+) is required as a cofactor. Co(2+) serves as cofactor. The cofactor is Zn(2+).

It is found in the cytoplasm. It catalyses the reaction 7-phospho-2-dehydro-3-deoxy-D-arabino-heptonate = 3-dehydroquinate + phosphate. It participates in metabolic intermediate biosynthesis; chorismate biosynthesis; chorismate from D-erythrose 4-phosphate and phosphoenolpyruvate: step 2/7. Its function is as follows. Catalyzes the conversion of 3-deoxy-D-arabino-heptulosonate 7-phosphate (DAHP) to dehydroquinate (DHQ). The chain is 3-dehydroquinate synthase from Clostridium acetobutylicum (strain ATCC 824 / DSM 792 / JCM 1419 / IAM 19013 / LMG 5710 / NBRC 13948 / NRRL B-527 / VKM B-1787 / 2291 / W).